The primary structure comprises 525 residues: MSDLLNRRLSLLGANLPLLKQCLHGIERECLRVTDEGRLAQTPHPESLGSALTNEQITTDYSESLLEFITPALPDPAQVLESLEQTHRFVYSKLGDELLWSPSMPCTLPAEEDIPIAEYGASNIGKLKHVYRKGLALRYGRTMQCIAGIHYNFSLPEALWPLLRASDGNEQSDRDYQSAAYIALIRNFRRYSWLLMYLFGASPALDKGFLRGRPHQLEELDAETLYLPYATSLRMSDLGYQSNAQAGLTPCYNNLASYTDSLRKAVGTPYPPYVEIGTHVDGEWVQLNTNILQIENEYYSNIRPKRVTYTGERPIQALTSRGVQYVEVRCLDINPFLPVGIDLTEARFLDAFLLFCALEDSPLLDNGECGQCTDNFLTVVKEGRRPGLELRRDGHPIELKAWASDLLGRIGQLAELLDRAQGGDEHAKALAAQQAKVDDASLTPSAQVLARMGEHEESFIQFSLRQSRLHAETFREQPLPTERQQAYETLARNSLAEQSRLEQEEVGDFDLFVGAYQASILAISN.

The protein belongs to the glutamate--cysteine ligase type 1 family. Type 1 subfamily.

The catalysed reaction is L-cysteine + L-glutamate + ATP = gamma-L-glutamyl-L-cysteine + ADP + phosphate + H(+). The protein operates within sulfur metabolism; glutathione biosynthesis; glutathione from L-cysteine and L-glutamate: step 1/2. This Pseudomonas putida (strain W619) protein is Glutamate--cysteine ligase.